The sequence spans 454 residues: Epoxide hydrolase 1 (454 aa).

Residues 1–21 (MWLEILLASVLGFVIYWFVSK) form a helical membrane-spanning segment. Residues 22–454 (DKEETLLLGD…RKFMGLLEQQ (433 aa)) are Cytoplasmic-facing. Aspartate 226 (nucleophile) is an active-site residue. Arginine 294 is subject to Dimethylated arginine. The Proton donor role is filled by tyrosine 373. Histidine 430 (proton acceptor) is an active-site residue.

It belongs to the peptidase S33 family.

Its subcellular location is the microsome membrane. The protein resides in the endoplasmic reticulum membrane. The catalysed reaction is cis-stilbene oxide + H2O = (1R,2R)-hydrobenzoin. The enzyme catalyses 1-(4-methoxyphenyl)-N-methyl-N-[(3-methyloxetan-3-yl)methyl]methanamine + H2O = 2-{[(4-methoxybenzyl)(methyl)amino]methyl}-2-methylpropane-1,3-diol. It carries out the reaction 8,9-epoxy-(5Z,11Z,14Z)-eicosatrienoate + H2O = 8,9-dihydroxy-(5Z,11Z,14Z)-eicosatrienoate. It catalyses the reaction 11,12-epoxy-(5Z,8Z,14Z)-eicosatrienoate + H2O = 11,12-dihydroxy-(5Z,8Z,14Z)-eicosatrienoate. The catalysed reaction is 2-(5Z,8Z,11Z,14Z-eicosatetraenoyl)-glycerol + H2O = glycerol + (5Z,8Z,11Z,14Z)-eicosatetraenoate + H(+). Its activity is regulated as follows. Inhibited by 10-hydroxystearamide and methoxy-arachidonyl fluorophosphate. In terms of biological role, biotransformation enzyme that catalyzes the hydrolysis of arene and aliphatic epoxides to less reactive and more water soluble dihydrodiols by the trans addition of water. May play a role in the metabolism of endogenous lipids such as epoxide-containing fatty acids. Metabolizes the abundant endocannabinoid 2-arachidonoylglycerol (2-AG) to free arachidonic acid (AA) and glycerol. Binds 20(S)-hydroxycholesterol (20(S)-OHC). The sequence is that of Epoxide hydrolase 1 (EPHX1) from Sus scrofa (Pig).